We begin with the raw amino-acid sequence, 366 residues long: MGGESNEGGEMGFKHGDDESGGISRVGITSMPLYAKADPFFSSADWDPVVNAAAAGFSSSHYHPSMAMDNPGMSCFSHYQPGSVSGFAADMPASLLPFGDCGGGQIGHFLGSDKKGERLIRAGESSHEDHHQVSDDAVLGASPVGKRRLPEAESQWNKKAVEEFQEDPQRGNDQSQKKHKNDQSKETVNKESSQSEEAPKENYIHMRARRGQATNSHSLAERVRREKISERMRLLQELVPGCNKITGKAVMLDEIINYVQSLQQQVEFLSMKLATVNPEINIDIDRILAKDLLQSRDRNTPTLGLNPFAGFQGNIPNLSATTNPQYNPLPQTTLESELQNLYQMGFVSNPSTMSSFSPNGRLKPEL.

Residues 1-11 (MGGESNEGGEM) are compositionally biased toward gly residues. Disordered regions lie at residues 1–20 (MGGE…DDES) and 123–201 (GESS…APKE). Composition is skewed to basic and acidic residues over residues 123–134 (GESSHEDHHQVS) and 159–170 (KAVEEFQEDPQR). The region spanning 212–262 (QATNSHSLAERVRREKISERMRLLQELVPGCNKITGKAVMLDEIINYVQSL) is the bHLH domain.

As to quaternary structure, homodimer. Interacts with IBH1. Binds reversibly to CRY2 after blue light illumination. In terms of tissue distribution, expressed constitutively in roots, leaves, stems, and flowers.

It localises to the nucleus. Transcriptional activator involved in cell elongation. Regulates the expression of a subset of genes involved in cell expansion by binding to the G-box motif. Binds to chromatin DNA of the FT gene and promotes its expression, and thus triggers flowering in response to blue light. The sequence is that of Transcription factor bHLH74 (BHLH74) from Arabidopsis thaliana (Mouse-ear cress).